A 157-amino-acid chain; its full sequence is Endoribonuclease YbeY (157 aa).

The Zn(2+) site is built by histidine 121, histidine 125, and histidine 131.

The protein belongs to the endoribonuclease YbeY family. Zn(2+) serves as cofactor.

The protein localises to the cytoplasm. Its function is as follows. Single strand-specific metallo-endoribonuclease involved in late-stage 70S ribosome quality control and in maturation of the 3' terminus of the 16S rRNA. This is Endoribonuclease YbeY from Salinispora tropica (strain ATCC BAA-916 / DSM 44818 / JCM 13857 / NBRC 105044 / CNB-440).